We begin with the raw amino-acid sequence, 150 residues long: Large ribosomal subunit protein bL9 (150 aa).

The protein belongs to the bacterial ribosomal protein bL9 family.

In terms of biological role, binds to the 23S rRNA. This chain is Large ribosomal subunit protein bL9, found in Streptococcus pyogenes serotype M5 (strain Manfredo).